A 222-amino-acid polypeptide reads, in one-letter code: Germin-like protein subfamily 1 member 4 (222 aa).

The N-terminal stretch at 1 to 24 (MEGLLQFLLAKIILLALASSFVYC) is a signal peptide. Cys-34 and Cys-50 are disulfide-bonded. Asn-38 is a glycosylation site (N-linked (GlcNAc...) asparagine). Positions 64-215 (SGLNVPGNTI…AFALDYNKVK (152 aa)) constitute a Cupin type-1 domain. His-112 and His-114 together coordinate Mn(2+). The N-linked (GlcNAc...) asparagine glycan is linked to Asn-139. Position 161 (His-161) interacts with Mn(2+).

Belongs to the germin family. In terms of assembly, oligomer (believed to be a pentamer but probably hexamer).

Its subcellular location is the secreted. It localises to the extracellular space. It is found in the apoplast. Its function is as follows. May play a role in plant defense. Probably has no oxalate oxidase activity even if the active site is conserved. The protein is Germin-like protein subfamily 1 member 4 of Arabidopsis thaliana (Mouse-ear cress).